The sequence spans 285 residues: Bifunctional protein FolD (285 aa).

Residues 165-167 (GRS) and serine 190 each bind NADP(+).

This sequence belongs to the tetrahydrofolate dehydrogenase/cyclohydrolase family. In terms of assembly, homodimer.

The enzyme catalyses (6R)-5,10-methylene-5,6,7,8-tetrahydrofolate + NADP(+) = (6R)-5,10-methenyltetrahydrofolate + NADPH. The catalysed reaction is (6R)-5,10-methenyltetrahydrofolate + H2O = (6R)-10-formyltetrahydrofolate + H(+). It participates in one-carbon metabolism; tetrahydrofolate interconversion. Functionally, catalyzes the oxidation of 5,10-methylenetetrahydrofolate to 5,10-methenyltetrahydrofolate and then the hydrolysis of 5,10-methenyltetrahydrofolate to 10-formyltetrahydrofolate. The polypeptide is Bifunctional protein FolD (Burkholderia thailandensis (strain ATCC 700388 / DSM 13276 / CCUG 48851 / CIP 106301 / E264)).